The following is an 843-amino-acid chain: Glycogen phosphorylase, brain form (843 aa).

Ala-2 is subject to N-acetylalanine. Phosphoserine; by PHK; in form phosphorylase A is present on Ser-15. AMP is bound by residues Asp-43, Tyr-197, and Arg-310. A Phosphotyrosine modification is found at Tyr-197. Residue Tyr-473 is modified to Phosphotyrosine. Position 524 is a phosphoserine (Ser-524). Residue Lys-569 coordinates pyridoxal 5'-phosphate. Positions Thr-677–Gly-678 are pyridoxal 5'-phosphate. An N6-(pyridoxal phosphate)lysine modification is found at Lys-681.

Belongs to the glycogen phosphorylase family. Homodimer. Dimers associate into a tetramer to form the enzymatically active phosphorylase A. Pyridoxal 5'-phosphate is required as a cofactor. Phosphorylation of Ser-15 converts phosphorylase B (unphosphorylated) to phosphorylase A.

The catalysed reaction is [(1-&gt;4)-alpha-D-glucosyl](n) + phosphate = [(1-&gt;4)-alpha-D-glucosyl](n-1) + alpha-D-glucose 1-phosphate. Its activity is regulated as follows. Activity of phosphorylase is controlled both by allosteric means (through the non-covalent binding of metabolites) and by covalent modification. Thus AMP allosterically activates, whereas ATP, ADP, and glucose-6-phosphate allosterically inhibit, phosphorylase B. In terms of biological role, glycogen phosphorylase that regulates glycogen mobilization. Phosphorylase is an important allosteric enzyme in carbohydrate metabolism. Enzymes from different sources differ in their regulatory mechanisms and in their natural substrates. However, all known phosphorylases share catalytic and structural properties. The protein is Glycogen phosphorylase, brain form (Pygb) of Mus musculus (Mouse).